A 241-amino-acid polypeptide reads, in one-letter code: Orotidine 5'-phosphate decarboxylase (241 aa).

Substrate is bound by residues Asp16, Lys37, 64–73 (DLKFHDIPTT), Thr128, Arg190, Gln199, Gly219, and Arg220. The Proton donor role is filled by Lys66.

It belongs to the OMP decarboxylase family. Type 1 subfamily. Homodimer.

The enzyme catalyses orotidine 5'-phosphate + H(+) = UMP + CO2. It participates in pyrimidine metabolism; UMP biosynthesis via de novo pathway; UMP from orotate: step 2/2. In terms of biological role, catalyzes the decarboxylation of orotidine 5'-monophosphate (OMP) to uridine 5'-monophosphate (UMP). This chain is Orotidine 5'-phosphate decarboxylase, found in Prochlorococcus marinus (strain NATL2A).